Here is a 479-residue protein sequence, read N- to C-terminus: Serine carboxypeptidase-like 29 (479 aa).

A signal peptide spans 1 to 28 (MAKTRGSCCLVNALIAIAFLATAHLCEA). Asn-47 and Asn-144 each carry an N-linked (GlcNAc...) asparagine glycan. Intrachain disulfides connect Cys-93–Cys-349, Cys-254–Cys-266, and Cys-290–Cys-317. Residue Ser-186 is part of the active site. Asn-293 is a glycosylation site (N-linked (GlcNAc...) asparagine). Active-site residues include Asp-386 and His-438.

The protein belongs to the peptidase S10 family. As to expression, expressed in seedlings, roots, leaves and flowers.

It is found in the secreted. Functionally, probable carboxypeptidase. This is Serine carboxypeptidase-like 29 (SCPL29) from Arabidopsis thaliana (Mouse-ear cress).